An 864-amino-acid polypeptide reads, in one-letter code: Leucine--tRNA ligase (864 aa).

A 'HIGH' region motif is present at residues 42-52 (PYPSGKLHMGH). A 'KMSKS' region motif is present at residues 624–628 (KMSKS). ATP is bound at residue Lys627.

It belongs to the class-I aminoacyl-tRNA synthetase family.

It localises to the cytoplasm. It catalyses the reaction tRNA(Leu) + L-leucine + ATP = L-leucyl-tRNA(Leu) + AMP + diphosphate. The polypeptide is Leucine--tRNA ligase (Burkholderia ambifaria (strain MC40-6)).